We begin with the raw amino-acid sequence, 516 residues long: L-amino-acid oxidase (516 aa).

The first 18 residues, 1-18, serve as a signal peptide directing secretion; the sequence is MNVFFMFSLLFLAALGSC. A disulfide bridge links C28 with C189. FAD is bound by residues 61 to 62, 81 to 82, R89, and 103 to 106; these read MA, EA, and GPMR. Residues R106 and H239 each contribute to the substrate site. An FAD-binding site is contributed by V279. C349 and C430 are disulfide-bonded. N-linked (GlcNAc...) asparagine glycosylation occurs at N379. Y390 contributes to the substrate binding site. Residues E475 and 482 to 487 contribute to the FAD site; that span reads GWIDST. 482-483 serves as a coordination point for substrate; that stretch reads GW.

This sequence belongs to the flavin monoamine oxidase family. FIG1 subfamily. As to quaternary structure, homodimer; non-covalently linked. It depends on FAD as a cofactor. In terms of processing, N-glycosylated. In terms of tissue distribution, expressed by the venom gland.

It localises to the secreted. The catalysed reaction is an L-alpha-amino acid + O2 + H2O = a 2-oxocarboxylate + H2O2 + NH4(+). It catalyses the reaction L-leucine + O2 + H2O = 4-methyl-2-oxopentanoate + H2O2 + NH4(+). It carries out the reaction L-phenylalanine + O2 + H2O = 3-phenylpyruvate + H2O2 + NH4(+). The enzyme catalyses L-methionine + O2 + H2O = 4-methylsulfanyl-2-oxobutanoate + H2O2 + NH4(+). The catalysed reaction is L-arginine + O2 + H2O = 5-guanidino-2-oxopentanoate + H2O2 + NH4(+). Its function is as follows. Catalyzes an oxidative deamination of predominantly hydrophobic and aromatic L-amino acids, thus producing hydrogen peroxide that may contribute to the diverse toxic effects of this enzyme. Is active on L-Arg, L-Phe, L-Met, and L-Leu and is weakly active on L-Val. Exhibits diverse biological activities, such as hemorrhage, hemolysis, edema, apoptosis of vascular endothelial cells or tumor cell lines, antibacterial and antiparasitic activities, as well as regulation of platelet aggregation. Its effect on platelets is controversial, since it either induces aggregation or inhibits agonist-induced aggregation. These different effects are probably due to different experimental conditions. The chain is L-amino-acid oxidase from Crotalus adamanteus (Eastern diamondback rattlesnake).